We begin with the raw amino-acid sequence, 483 residues long: MQLEVILPLVAYLVVVFGISVYAMRKRSTGTFLNEYFLGSRSMGGIVLAMTLTATYISASSFIGGPGAAYKYGLGWVLLAMIQLPAVWLSLGILGKKFAILARRYNAVTLNDMLFARYQSRLLVWLASLSLLVAFVGAMTVQFIGGARLLETAAGIPYETGLLIFGISIALYTAFGGFRASVLNDTMQGLVMLIGTVVLLIGVVHAAGGLSNAVQTLQTIDPQLVTPQGADDILSPAFMTSFWVLVCFGVIGLPHTAVRCISYKDSKAVHRGIIIGTIVVAILMFGMHLAGALGRAVIPDLTVPDLVIPTLMVKVLPPFAAGIFLAAPMAAIMSTINAQLLQSSATIIKDLYLNIRPDQMQNETRLKRMSAVITLVLGALLLLAAWKPPEMIIWLNLLAFGGLEAVFLWPLVLGLYWERANAKGALSAMIVGGVLYAVLATLNIQYLGFHPIVPSLLLSLLAFLVGNRFGTSVPQATVLTTDK.

At 1–2 (MQ) the chain is on the periplasmic side. Residues 3–23 (LEVILPLVAYLVVVFGISVYA) traverse the membrane as a helical segment. The Cytoplasmic segment spans residues 24-42 (MRKRSTGTFLNEYFLGSRS). The helical transmembrane segment at 43–63 (MGGIVLAMTLTATYISASSFI) threads the bilayer. Topologically, residues 64–73 (GGPGAAYKYG) are periplasmic. Residues 74 to 94 (LGWVLLAMIQLPAVWLSLGIL) form a helical membrane-spanning segment. At 95-123 (GKKFAILARRYNAVTLNDMLFARYQSRLL) the chain is on the cytoplasmic side. A helical membrane pass occupies residues 124–144 (VWLASLSLLVAFVGAMTVQFI). Residues 145 to 157 (GGARLLETAAGIP) lie on the Periplasmic side of the membrane. The chain crosses the membrane as a helical span at residues 158–178 (YETGLLIFGISIALYTAFGGF). Topologically, residues 179–189 (RASVLNDTMQG) are cytoplasmic. The chain crosses the membrane as a helical span at residues 190 to 210 (LVMLIGTVVLLIGVVHAAGGL). The Periplasmic portion of the chain corresponds to 211 to 232 (SNAVQTLQTIDPQLVTPQGADD). A helical membrane pass occupies residues 233 to 253 (ILSPAFMTSFWVLVCFGVIGL). Residues 254–272 (PHTAVRCISYKDSKAVHRG) are Cytoplasmic-facing. A helical transmembrane segment spans residues 273 to 293 (IIIGTIVVAILMFGMHLAGAL). The Periplasmic segment spans residues 294 to 305 (GRAVIPDLTVPD). A helical transmembrane segment spans residues 306–326 (LVIPTLMVKVLPPFAAGIFLA). Residues 327 to 368 (APMAAIMSTINAQLLQSSATIIKDLYLNIRPDQMQNETRLKR) are Cytoplasmic-facing. Residues 369–389 (MSAVITLVLGALLLLAAWKPP) traverse the membrane as a helical segment. Residues 390 to 391 (EM) are Periplasmic-facing. Residues 392–412 (IIWLNLLAFGGLEAVFLWPLV) form a helical membrane-spanning segment. Over 413 to 423 (LGLYWERANAK) the chain is Cytoplasmic. A helical transmembrane segment spans residues 424–444 (GALSAMIVGGVLYAVLATLNI). Residue Gln-445 is a topological domain, periplasmic. A helical membrane pass occupies residues 446–466 (YLGFHPIVPSLLLSLLAFLVG). The Cytoplasmic segment spans residues 467 to 483 (NRFGTSVPQATVLTTDK).

It belongs to the sodium:solute symporter (SSF) (TC 2.A.21) family.

The protein resides in the cell inner membrane. It carries out the reaction (R)-pantothenate(in) + Na(+)(in) = (R)-pantothenate(out) + Na(+)(out). Pantothenate uptake is not reduced in osmotically shocked cells or by ATP depletion with arsenate, but is reduced greater than 90% by the dissipation of the membrane electrochemical gradient with 2,4-dinitrophenol. Its function is as follows. Catalyzes the sodium-dependent uptake of extracellular pantothenate. The sequence is that of Sodium/pantothenate symporter from Escherichia coli (strain K12).